Reading from the N-terminus, the 577-residue chain is Laccase-17 (577 aa).

Positions 1–22 (MALQLLLAVFSCVLLLPQPAFG) are cleaved as a signal peptide. 2 Plastocyanin-like domains span residues 30-146 (EIKM…PKRG) and 156-309 (KEVP…YEPP). 2 N-linked (GlcNAc...) asparagine glycosylation sites follow: Asn35 and Asn76. His80 and His82 together coordinate Cu cation. N-linked (GlcNAc...) asparagine glycosylation is present at Asn112. Residues His125 and His127 each coordinate Cu cation. N-linked (GlcNAc...) asparagine glycans are attached at residues Asn185, Asn201, Asn237, Asn297, Asn335, Asn383, Asn391, Asn401, Asn437, Asn444, Asn450, and Asn460. Residues 427 to 561 (KFPWSPIVPF…RMAWLVLDGD (135 aa)) enclose the Plastocyanin-like 3 domain. His478, His481, His483, His540, Cys541, His542, and His546 together coordinate Cu cation.

It belongs to the multicopper oxidase family. Cu cation serves as cofactor. As to expression, ubiquitous with higher levels in the inflorescence stem.

Its subcellular location is the secreted. The protein localises to the extracellular space. It localises to the apoplast. The enzyme catalyses 4 hydroquinone + O2 = 4 benzosemiquinone + 2 H2O. In terms of biological role, lignin degradation and detoxification of lignin-derived products. The polypeptide is Laccase-17 (LAC17) (Arabidopsis thaliana (Mouse-ear cress)).